Here is a 238-residue protein sequence, read N- to C-terminus: Ribonuclease PH (238 aa).

Residues Arg86 and 124-126 (GTR) contribute to the phosphate site.

The protein belongs to the RNase PH family. In terms of assembly, homohexameric ring arranged as a trimer of dimers.

The catalysed reaction is tRNA(n+1) + phosphate = tRNA(n) + a ribonucleoside 5'-diphosphate. Its function is as follows. Phosphorolytic 3'-5' exoribonuclease that plays an important role in tRNA 3'-end maturation. Removes nucleotide residues following the 3'-CCA terminus of tRNAs; can also add nucleotides to the ends of RNA molecules by using nucleoside diphosphates as substrates, but this may not be physiologically important. Probably plays a role in initiation of 16S rRNA degradation (leading to ribosome degradation) during starvation. In Haemophilus influenzae (strain PittEE), this protein is Ribonuclease PH.